We begin with the raw amino-acid sequence, 79 residues long: Large ribosomal subunit protein uL22 (79 aa).

This sequence belongs to the universal ribosomal protein uL22 family. As to quaternary structure, part of the 50S ribosomal subunit.

In terms of biological role, this protein binds specifically to 23S rRNA; its binding is stimulated by other ribosomal proteins, e.g. L4, L17, and L20. It is important during the early stages of 50S assembly. It makes multiple contacts with different domains of the 23S rRNA in the assembled 50S subunit and ribosome. Functionally, the globular domain of the protein is located near the polypeptide exit tunnel on the outside of the subunit, while an extended beta-hairpin is found that lines the wall of the exit tunnel in the center of the 70S ribosome. The protein is Large ribosomal subunit protein uL22 (rplV) of Clover proliferation phytoplasma.